The primary structure comprises 791 residues: Major facilitator superfamily domain-containing protein 6 (791 aa).

Ala2 is subject to N-acetylalanine. Thr10 bears the Phosphothreonine mark. The tract at residues Leu22–Ser47 is disordered. Low complexity predominate over residues Ser37 to Ser47. The next 6 helical transmembrane spans lie at Val73–Tyr93, Leu105–Ala125, Lys132–Val152, Ala286–Val306, Trp335–Ile355, and Gln369–Phe389. The interval Glu407 to Thr427 is disordered. The segment covering Ser416–Thr427 has biased composition (low complexity). 6 consecutive transmembrane segments (helical) span residues Val450–Trp470, Thr479–Phe499, Ile507–Ile527, Gly544–Pro564, Leu579–Ala599, and Gly605–Val625. Disordered regions lie at residues Met662–Ala687 and Leu723–His791. Positions Ser750 to Ala768 are enriched in polar residues. The span at Gln782 to His791 shows a compositional bias: low complexity.

The protein belongs to the major facilitator superfamily. MFSD6 family. In terms of assembly, may interact with HLA-B62. As to expression, widely expressed. Expression levels in peripheral blood mononuclear cells are highly variable between individuals, including no expression at all.

The protein localises to the membrane. This chain is Major facilitator superfamily domain-containing protein 6 (MFSD6), found in Homo sapiens (Human).